Consider the following 145-residue polypeptide: Basic phospholipase A2 BFPA (145 aa).

The first 27 residues, 1–27 (MNPAHLLVLLAVCVSLLGAANIPPQSL), serve as a signal peptide directing secretion. 7 disulfide bridges follow: Cys38–Cys97, Cys52–Cys144, Cys54–Cys70, Cys69–Cys125, Cys76–Cys118, Cys86–Cys111, and Cys104–Cys116. Positions 53, 55, and 57 each coordinate Ca(2+). The active site involves His73. Asp74 provides a ligand contact to Ca(2+). Asp119 is a catalytic residue.

It belongs to the phospholipase A2 family. Group I subfamily. D49 sub-subfamily. Homodimer; disulfide-linked. Ca(2+) is required as a cofactor. In terms of tissue distribution, expressed by the venom gland.

Its subcellular location is the secreted. The enzyme catalyses a 1,2-diacyl-sn-glycero-3-phosphocholine + H2O = a 1-acyl-sn-glycero-3-phosphocholine + a fatty acid + H(+). Snake venom phospholipase A2 (PLA2) that inhibits blood coagulation and shows bactericidal activities against both Gram-negative and -positive bacteria (E.coli, MIC=0.4 uM and S.aureus, MIC=0.1 uM). PLA2 catalyzes the calcium-dependent hydrolysis of the 2-acyl groups in 3-sn-phosphoglycerides. This chain is Basic phospholipase A2 BFPA, found in Bungarus fasciatus (Banded krait).